The sequence spans 202 residues: Recombination protein RecR (202 aa).

The C4-type zinc finger occupies 61–76 (CARCNSFTEDDICATC). The region spanning 84 to 179 (SVLCVVETPA…KVTRLARGVP (96 aa)) is the Toprim domain.

Belongs to the RecR family.

May play a role in DNA repair. It seems to be involved in an RecBC-independent recombinational process of DNA repair. It may act with RecF and RecO. In Bordetella petrii (strain ATCC BAA-461 / DSM 12804 / CCUG 43448), this protein is Recombination protein RecR.